A 59-amino-acid chain; its full sequence is MNKNEIETQPVTWLEEVSDQNFDEDVFGACSTNTFSLSDYWGNNGAWCTLTHECMAWCK.

A propeptide spanning residues 1–29 (MNKNEIETQPVTWLEEVSDQNFDEDVFGA) is cleaved from the precursor. Residues 30-31 (CS) constitute a cross-link (lanthionine (Cys-Ser)). A 2,3-didehydrobutyrine mark is found at T32 and T34. S36 carries the 2,3-didehydroalanine (Ser) modification. The segment at residues 38–48 (SDYWGNNGAWC) is a cross-link (lanthionine (Ser-Cys)). Cross-links (beta-methyllanthionine (Thr-Cys)) lie at residues 49–54 (TLTHEC) and 51–58 (THECMAWC).

In terms of processing, maturation of lantibiotics involves the enzymatic conversion of Thr, and Ser into dehydrated AA and the formation of thioether bonds with cysteine. This is followed by membrane translocation and cleavage of the modified precursor. Post-translationally, it is not established whether the 2,3-didehydrobutyrines are the E- or Z-isomers. In the NMR model they were assumed to be the Z-isomer.

The protein resides in the secreted. Its function is as follows. Lanthionine-containing peptide antibiotic (lantibiotic) active on Gram-positive bacteria. The bactericidal activity of lantibiotics is based on depolarization of energized bacterial cytoplasmic membranes, initiated by the formation of aqueous transmembrane pores. When present individually lacticin 3147 A1 exhibits strong activity towards L.lactis strain AM2, weak activity towards L.lactis strain HP and no activity towards L.lactis strain IFPL359, but when combined with lacticin 3147 A2 it displays strong activity towards all three strains. This chain is Lantibiotic lacticin 3147 A1, found in Lactococcus lactis subsp. lactis (Streptococcus lactis).